The chain runs to 152 residues: Small ribosomal subunit protein uS17A (152 aa).

The protein belongs to the universal ribosomal protein uS17 family. In terms of assembly, component of the small ribosomal subunit (SSU). Mature yeast ribosomes consist of a small (40S) and a large (60S) subunit. The 40S small subunit contains 1 molecule of ribosomal RNA (18S rRNA) and at least 33 different proteins. The large 60S subunit contains 3 rRNA molecules (25S, 5.8S and 5S rRNA) and at least 46 different proteins.

The protein resides in the cytoplasm. It is found in the nucleus. In terms of biological role, component of the ribosome, a large ribonucleoprotein complex responsible for the synthesis of proteins in the cell. The small ribosomal subunit (SSU) binds messenger RNAs (mRNAs) and translates the encoded message by selecting cognate aminoacyl-transfer RNA (tRNA) molecules. The large subunit (LSU) contains the ribosomal catalytic site termed the peptidyl transferase center (PTC), which catalyzes the formation of peptide bonds, thereby polymerizing the amino acids delivered by tRNAs into a polypeptide chain. The nascent polypeptides leave the ribosome through a tunnel in the LSU and interact with protein factors that function in enzymatic processing, targeting, and the membrane insertion of nascent chains at the exit of the ribosomal tunnel. The sequence is that of Small ribosomal subunit protein uS17A (rps1101) from Schizosaccharomyces pombe (strain 972 / ATCC 24843) (Fission yeast).